The sequence spans 419 residues: MAAEIICVGTEILLGDIVNSNSQYLAQEFAKLGISHYFQSVVGDNIARIHSLLEIAVQRGTEIIVFTGGLGPTPDDLTTEAIAAYFQTPLIERPEIVADITTKFAQRGRTMTPNNRKQALLPEGAEILPNPTGTAPGLIWQPIEGLTIFTFPGVPGEMKRMWQETAVPYLKAQGYGQIVIHSEMMRFRGIGESSLAAKVNHLFALTNPTVAPYASKGEVKLRVAARAESVAAAKKLMDPVVAEIKAIAGLDYFGSDGASLPLVIGDLLRTRQETLAVAESCTGGGLGALITSVSGSSDYFLGGITAYANAVKINLLGVNSADLQNQGAVSETVAQQMALGAKQALDSDWGIGITGIAGPKSDDSAKPIGLVCIAWADPQNHVFSHTYRYGTDRDRELIRYLSACDALDGLRRYLKSDKS.

This sequence belongs to the CinA family.

This is CinA-like protein from Picosynechococcus sp. (strain ATCC 27264 / PCC 7002 / PR-6) (Agmenellum quadruplicatum).